The following is a 585-amino-acid chain: ADP-ribosylation factor-binding protein GGA2 (585 aa).

A VHS domain is found at 33–169 (ACRMSLAEPD…LLKYKGYAFP (137 aa)). Residues lysine 180 and lysine 287 each participate in a glycyl lysine isopeptide (Lys-Gly) (interchain with G-Cter in ubiquitin) cross-link. Positions 196-321 (EIAQAAKLEE…LLEKFNLLKN (126 aa)) constitute a GAT domain. Residues 358–378 (LDEAPSQGNNNTNGTGTPAAA) form a disordered region. Residues 365–374 (GNNNTNGTGT) are compositionally biased toward low complexity. The GAE domain occupies 466 to 581 (TTTAPARTLV…TQAEETAVFT (116 aa)).

As to quaternary structure, binds to ARF1 and ARF2.

The protein localises to the golgi apparatus. The protein resides in the trans-Golgi network. Its function is as follows. May play a role in the regulation of membrane traffic through the trans-Golgi network. In Saccharomyces cerevisiae (strain ATCC 204508 / S288c) (Baker's yeast), this protein is ADP-ribosylation factor-binding protein GGA2 (GGA2).